A 473-amino-acid polypeptide reads, in one-letter code: FAD-dependent monooxygenase ctvC (473 aa).

Positions 37, 51, and 110 each coordinate FAD. A helical transmembrane segment spans residues 218–238 (IGPGFTFLIFPAAGDSLFWVL). FAD is bound by residues D310 and A323. N358 carries N-linked (GlcNAc...) asparagine glycosylation. The chain crosses the membrane as a helical span at residues 451-471 (LVYCFGVVILLWISWAVFNVN).

It belongs to the paxM FAD-dependent monooxygenase family. The cofactor is FAD.

Its subcellular location is the membrane. It participates in mycotoxin biosynthesis. Its function is as follows. FAD-dependent monooxygenase; part of the gene cluster that mediates the biosynthesis of citreoviridin, an inhibitor of the of F1-ATPase beta-subunit. The HR-PKS ctvA accepts acetyl-CoA as the starter unit and catalyzes eight iterations of malonyl-CoA extension and four iterations of SAM-dependent methylation at C4, C12, C14, and C16. The KR and DH domains selectively act on the first six iterations to generate the hexaene chain. In the last three iterations, the KR and DH domains terminate their functions to yield a beta,delta-diketo ester moiety, which then undergoes intramolecular cyclization to yield an alpha-pyrone intermediate. Subsequently, ctvB methylates the alpha-pyrone hydroxyl group to generate citreomontanin. In order to form the tetrahydrofuran ring with the correct stereochemistry, the terminal alkenes of citreomontanin need to undergo isomerization to yield a (17Z)-hexaene, a step that could be catalyzed by ctvC. The (17Z)-hexaene then undergoes bisepoxidation by ctvC to form a (17R,16R,15S,14R)-bisepoxide moiety. Lastly, ctvD acts as a regioselective hydrolase to form the tetrahydrofuran ring with the substituents in the correct absolute configuration, completing the biosynthesis of citreoviridin. The polypeptide is FAD-dependent monooxygenase ctvC (Aspergillus terreus (strain NIH 2624 / FGSC A1156)).